The primary structure comprises 456 residues: CCA-adding enzyme (456 aa).

Residues S53 and K56 each coordinate ATP. The CTP site is built by S53 and K56. The Mg(2+) site is built by D65, D67, and D119. ATP contacts are provided by H142, K161, and Y170. Residues H142, K161, and Y170 each coordinate CTP.

It belongs to the tRNA nucleotidyltransferase/poly(A) polymerase family. Archaeal CCA-adding enzyme subfamily. As to quaternary structure, homodimer. The cofactor is Mg(2+).

It carries out the reaction a tRNA precursor + 2 CTP + ATP = a tRNA with a 3' CCA end + 3 diphosphate. It catalyses the reaction a tRNA with a 3' CCA end + 2 CTP + ATP = a tRNA with a 3' CCACCA end + 3 diphosphate. Its function is as follows. Catalyzes the addition and repair of the essential 3'-terminal CCA sequence in tRNAs without using a nucleic acid template. Adds these three nucleotides in the order of C, C, and A to the tRNA nucleotide-73, using CTP and ATP as substrates and producing inorganic pyrophosphate. tRNA 3'-terminal CCA addition is required both for tRNA processing and repair. Also involved in tRNA surveillance by mediating tandem CCA addition to generate a CCACCA at the 3' terminus of unstable tRNAs. While stable tRNAs receive only 3'-terminal CCA, unstable tRNAs are marked with CCACCA and rapidly degraded. In Thermococcus kodakarensis (strain ATCC BAA-918 / JCM 12380 / KOD1) (Pyrococcus kodakaraensis (strain KOD1)), this protein is CCA-adding enzyme.